We begin with the raw amino-acid sequence, 549 residues long: Serine/threonine-protein phosphatase PPQ (549 aa).

Positions 1–13 (MRRSPSRSNNNFA) are enriched in polar residues. 4 disordered regions span residues 1 to 50 (MRRS…RSLP), 64 to 85 (YNTL…DNLL), 133 to 158 (TSST…NYSS), and 189 to 219 (SRVK…PKSS). 2 stretches are compositionally biased toward low complexity: residues 16–32 (NCST…TTPS) and 68–83 (ASAG…SNDN). Over residues 205-217 (APSSPTSGIPNPK) the composition is skewed to polar residues. Mn(2+)-binding residues include Asp-301, His-303, Asp-329, and Asn-361. The Proton donor role is filled by His-362. His-410 and His-485 together coordinate Mn(2+).

The protein belongs to the PPP phosphatase family. PP-Z subfamily. Mn(2+) serves as cofactor.

The catalysed reaction is O-phospho-L-seryl-[protein] + H2O = L-seryl-[protein] + phosphate. The enzyme catalyses O-phospho-L-threonyl-[protein] + H2O = L-threonyl-[protein] + phosphate. Functionally, phosphatase involved in the regulation of protein synthesis. Affects translational accuracy. The polypeptide is Serine/threonine-protein phosphatase PPQ (PPQ1) (Saccharomyces cerevisiae (strain ATCC 204508 / S288c) (Baker's yeast)).